Consider the following 127-residue polypeptide: Methylglyoxal synthase (127 aa).

Residues 1–127 (MEGQRCIALI…ENLIDFNSAD (127 aa)) form the MGS-like domain. Substrate contacts are provided by residues H12, K16, 38–41 (TGTT), and 59–60 (SG). The active-site Proton donor/acceptor is D65. Position 92 (H92) interacts with substrate.

It belongs to the methylglyoxal synthase family.

The enzyme catalyses dihydroxyacetone phosphate = methylglyoxal + phosphate. Functionally, catalyzes the formation of methylglyoxal from dihydroxyacetone phosphate. The chain is Methylglyoxal synthase from Agrobacterium fabrum (strain C58 / ATCC 33970) (Agrobacterium tumefaciens (strain C58)).